The following is a 117-amino-acid chain: Large ribosomal subunit protein bL20 (117 aa).

This sequence belongs to the bacterial ribosomal protein bL20 family.

In terms of biological role, binds directly to 23S ribosomal RNA and is necessary for the in vitro assembly process of the 50S ribosomal subunit. It is not involved in the protein synthesizing functions of that subunit. This Maridesulfovibrio salexigens (strain ATCC 14822 / DSM 2638 / NCIMB 8403 / VKM B-1763) (Desulfovibrio salexigens) protein is Large ribosomal subunit protein bL20.